Reading from the N-terminus, the 167-residue chain is MNINNRIGIYPGTFDPITFGHIDIIKRACKLVDRLIIGVAENINKHTTFDAKLRTSMAENEIKRLEIDVDVVSFNGLLVKFAKEQNASVIIRGLRAVSDFDYEFQMSWVNYKLLPEIETIFLPASEDTQFISSSFVKEIARLGESVSKFVSVGVQKELINLNRIGSE.

Thr-13 lines the substrate pocket. Residues 13-14 (TF) and His-21 contribute to the ATP site. Substrate contacts are provided by Lys-45, Leu-78, and Arg-92. ATP contacts are provided by residues 93-95 (GLR), Glu-103, and 128-134 (TQFISSS).

It belongs to the bacterial CoaD family. Homohexamer. Mg(2+) is required as a cofactor.

The protein resides in the cytoplasm. It carries out the reaction (R)-4'-phosphopantetheine + ATP + H(+) = 3'-dephospho-CoA + diphosphate. Its pathway is cofactor biosynthesis; coenzyme A biosynthesis; CoA from (R)-pantothenate: step 4/5. Functionally, reversibly transfers an adenylyl group from ATP to 4'-phosphopantetheine, yielding dephospho-CoA (dPCoA) and pyrophosphate. This chain is Phosphopantetheine adenylyltransferase, found in Wolbachia sp. subsp. Brugia malayi (strain TRS).